We begin with the raw amino-acid sequence, 100 residues long: CCAAT/enhancer-binding protein homolog 2 (100 aa).

2 disordered regions span residues 1 to 60 and 79 to 100; these read MSGN…ETLE and AYAKNDGNDGPPPPPPPSSSAV. Residues 17–80 form the bZIP domain; it reads EDDYSTKRKR…SFLKEMFMAY (64 aa). The basic motif stretch occupies residues 23–48; it reads KRKRNNEAVNRTRQKKRQEENDTAEK. Residues 24–83 adopt a coiled-coil conformation; it reads RKRNNEAVNRTRQKKRQEENDTAEKVDELKKENETLERKVEQLQKELSFLKEMFMAYAKN. Over residues 39-60 the composition is skewed to basic and acidic residues; that stretch reads RQEENDTAEKVDELKKENETLE. A leucine-zipper region spans residues 52–73; the sequence is LKKENETLERKVEQLQKELSFL. Pro residues predominate over residues 88–100; the sequence is GPPPPPPPSSSAV.

It belongs to the bZIP family. C/EBP subfamily. In terms of assembly, interacts with transcription factor zip-11. In terms of tissue distribution, expressed broadly in somatic tissues including the intestine.

The protein localises to the nucleus. Transcription factor that binds to the promoter and the enhancer regions of target genes. Regulates expression of genes involved in fat metabolism, including ech-1.1 and fat-5. Has a protective role in response to infection by the Gram-negative bacterium P.aeruginosa. Required for the activation of infection response gene irg-1 following P.aeruginosa infection. Required to prevent P.aeruginosa ToxA-mediated lethality. May also function in concert with transcription factor zip-11 to mediate immune responses, independently of the pmk-1/p38 MAPK pathway. May act together with the bZIP transcription factor, zip-2. The protein is CCAAT/enhancer-binding protein homolog 2 of Caenorhabditis elegans.